Reading from the N-terminus, the 296-residue chain is Giardin subunit alpha-4 (296 aa).

Annexin repeat units follow at residues 3–72, 74–146, 153–223, and 226–294; these read ATVS…VHAW, SRFE…GWVK, KSIK…AHHW, and DPGQ…VFWR.

Belongs to the annexin family. Giardin subunit alpha subfamily.

Its subcellular location is the cytoplasm. The protein resides in the cytoskeleton. In terms of biological role, giardins are involved in parasite attachment to the intestinal mucosa and in the cytoskeletal disassembly and reassembly that marks the transition from infectious trophozoite to transmissible cyst. They may interact with other cytoskeletal proteins such as microtubules in the microribbons or crossbridges, to maintain the integrity of the ventral disk. The polypeptide is Giardin subunit alpha-4 (Giardia intestinalis (Giardia lamblia)).